The primary structure comprises 156 residues: Endoribonuclease YbeY (156 aa).

Positions 122, 126, and 132 each coordinate Zn(2+).

This sequence belongs to the endoribonuclease YbeY family. Zn(2+) is required as a cofactor.

Its subcellular location is the cytoplasm. Its function is as follows. Single strand-specific metallo-endoribonuclease involved in late-stage 70S ribosome quality control and in maturation of the 3' terminus of the 16S rRNA. In Bacillus cereus (strain B4264), this protein is Endoribonuclease YbeY.